The sequence spans 250 residues: Small ribosomal subunit protein uS3 (250 aa).

A KH type-2 domain is found at 39–109; the sequence is IRNYVQARLK…EVKIDVVEVI (71 aa). Positions 225 to 239 are enriched in basic and acidic residues; that stretch reads INERRGDSKSRPRDP. The disordered stretch occupies residues 225–250; it reads INERRGDSKSRPRDPRNKRRRRTKRS. A compositionally biased stretch (basic residues) spans 240–250; sequence RNKRRRRTKRS.

Belongs to the universal ribosomal protein uS3 family. As to quaternary structure, part of the 30S ribosomal subunit. Forms a tight complex with proteins S10 and S14.

Functionally, binds the lower part of the 30S subunit head. Binds mRNA in the 70S ribosome, positioning it for translation. The polypeptide is Small ribosomal subunit protein uS3 (Chlorobium phaeobacteroides (strain DSM 266 / SMG 266 / 2430)).